Here is a 340-residue protein sequence, read N- to C-terminus: S-adenosylmethionine:tRNA ribosyltransferase-isomerase (340 aa).

Belongs to the QueA family. In terms of assembly, monomer.

It is found in the cytoplasm. The enzyme catalyses 7-aminomethyl-7-carbaguanosine(34) in tRNA + S-adenosyl-L-methionine = epoxyqueuosine(34) in tRNA + adenine + L-methionine + 2 H(+). It functions in the pathway tRNA modification; tRNA-queuosine biosynthesis. Functionally, transfers and isomerizes the ribose moiety from AdoMet to the 7-aminomethyl group of 7-deazaguanine (preQ1-tRNA) to give epoxyqueuosine (oQ-tRNA). The sequence is that of S-adenosylmethionine:tRNA ribosyltransferase-isomerase from Nitratiruptor sp. (strain SB155-2).